A 492-amino-acid chain; its full sequence is GTPase Der (492 aa).

EngA-type G domains lie at P3 to E167 and I188 to A363. GTP-binding positions include G9 to S16, D56 to F60, N119 to E122, G194 to S201, D241 to I245, and N306 to D309. In terms of domain architecture, KH-like spans Y364–T448. The segment at V464–G492 is disordered. The segment covering K469–G492 has biased composition (basic residues).

This sequence belongs to the TRAFAC class TrmE-Era-EngA-EngB-Septin-like GTPase superfamily. EngA (Der) GTPase family. Associates with the 50S ribosomal subunit.

Its function is as follows. GTPase that plays an essential role in the late steps of ribosome biogenesis. The protein is GTPase Der of Desulforapulum autotrophicum (strain ATCC 43914 / DSM 3382 / VKM B-1955 / HRM2) (Desulfobacterium autotrophicum).